The following is a 148-amino-acid chain: Hemoglobin subunit beta-B (148 aa).

The Globin domain occupies 3–148; the sequence is DWTDAERAAI…VVSALGRQYH (146 aa). Residues His-64 and His-93 each coordinate heme b.

This sequence belongs to the globin family. Heterotetramer of two alpha chains and two beta chains. As to expression, red blood cells.

Involved in oxygen transport from gills to the various peripheral tissues. The polypeptide is Hemoglobin subunit beta-B (hbb2) (Seriola quinqueradiata (Five-ray yellowtail)).